Here is a 252-residue protein sequence, read N- to C-terminus: Mediator of RNA polymerase II transcription subunit 4 (252 aa).

A coiled-coil region spans residues lysine 70 to glutamate 112. Residues histidine 218–aspartate 252 form a disordered region. Low complexity predominate over residues serine 241–aspartate 252.

It belongs to the Mediator complex subunit 4 family. Component of the Mediator complex.

It is found in the nucleus. Functionally, component of the Mediator complex, a coactivator involved in the regulated transcription of nearly all RNA polymerase II-dependent genes. Mediator functions as a bridge to convey information from gene-specific regulatory proteins to the basal RNA polymerase II transcription machinery. Mediator is recruited to promoters by direct interactions with regulatory proteins and serves as a scaffold for the assembly of a functional preinitiation complex with RNA polymerase II and the general transcription factors. The chain is Mediator of RNA polymerase II transcription subunit 4 (med4) from Xenopus tropicalis (Western clawed frog).